The sequence spans 336 residues: Protein-glutamate methylesterase/protein-glutamine glutaminase 1 (336 aa).

The region spanning 2–119 is the Response regulatory domain; sequence KIAIVNDMPL…GNPQEAAAPL (118 aa). Asp-53 carries the 4-aspartylphosphate modification. Residues 147–336 enclose the CheB-type methylesterase domain; that stretch reads TASRQRLVAI…APRLLEIFPK (190 aa). Residues Ser-159, His-186, and Asp-279 contribute to the active site.

Belongs to the CheB family. In terms of processing, phosphorylated by CheA. Phosphorylation of the N-terminal regulatory domain activates the methylesterase activity.

Its subcellular location is the cytoplasm. The catalysed reaction is [protein]-L-glutamate 5-O-methyl ester + H2O = L-glutamyl-[protein] + methanol + H(+). The enzyme catalyses L-glutaminyl-[protein] + H2O = L-glutamyl-[protein] + NH4(+). In terms of biological role, involved in chemotaxis. Part of a chemotaxis signal transduction system that modulates chemotaxis in response to various stimuli. Catalyzes the demethylation of specific methylglutamate residues introduced into the chemoreceptors (methyl-accepting chemotaxis proteins or MCP) by CheR. Also mediates the irreversible deamidation of specific glutamine residues to glutamic acid. This chain is Protein-glutamate methylesterase/protein-glutamine glutaminase 1, found in Pseudomonas fluorescens (strain Pf0-1).